The following is a 503-amino-acid chain: Protein-cysteine N-palmitoyltransferase HHAT-like protein (503 aa).

8 helical membrane-spanning segments follow: residues 12–31, 65–87, 100–122, 127–149, 250–272, 287–309, 426–445, and 460–482; these read LGLY…RGLL, WVMW…VLFA, WMYA…LLLL, MVLY…LASL, AGLS…ILTI, LAGL…FGVV, VRAL…NLVS, and ILTG…VQLV.

It belongs to the membrane-bound acyltransferase family. HHAT subfamily. As to quaternary structure, interacts with SHH.

It is found in the endoplasmic reticulum membrane. Negatively regulates N-terminal palmitoylation of SHH by HHAT/SKN. This Mus musculus (Mouse) protein is Protein-cysteine N-palmitoyltransferase HHAT-like protein (Hhatl).